Here is a 170-residue protein sequence, read N- to C-terminus: Methanogen homoaconitase small subunit (170 aa).

The YLRT motif lies at 26 to 29 (YLRT).

It belongs to the LeuD family. LeuD type 2 subfamily. In terms of assembly, heterotetramer of 2 HacA and 2 HacB proteins.

The enzyme catalyses (2R)-homocitrate = (2R,3S)-homoisocitrate. The catalysed reaction is (2R)-homocitrate = cis-homoaconitate + H2O. It carries out the reaction (2R,3S)-homoisocitrate = cis-homoaconitate + H2O. It catalyses the reaction cis-(homo)2aconitate + H2O = (2R,3S)-iso(homo)2citrate. The enzyme catalyses cis-(homo)3aconitate + H2O = (2R,3S)-iso(homo)3citrate. It functions in the pathway organic acid metabolism; 2-oxosuberate biosynthesis. In terms of biological role, component of a hydro-lyase with broad substrate specificity for cis-unsaturated tricarboxylic acids. Catalyzes both the reversible dehydration of (R)-homocitrate ((R)-2-hydroxybutane-1,2,4-tricarboxylate) to produce cis-homoaconitate ((Z)-but-1-ene-1,2,4-tricarboxylate), and its hydration to homoisocitrate ((1R,2S)-1-hydroxybutane-1,2,4-tricarboxylate). Is also able to hydrate the analogous longer chain substrates cis-homo(2)-aconitate, cis-homo(3)-aconitate. These reactions are part of the biosynthesis pathway of coenzyme B. This Methanothermobacter thermautotrophicus (strain ATCC 29096 / DSM 1053 / JCM 10044 / NBRC 100330 / Delta H) (Methanobacterium thermoautotrophicum) protein is Methanogen homoaconitase small subunit (hacB).